Here is a 2225-residue protein sequence, read N- to C-terminus: Multifunctional protein CAD (2225 aa).

A2 carries the N-acetylalanine modification. The GATase (Glutamine amidotransferase) stretch occupies residues 2–365 (AALVLEDGSV…TVREAVAGNP (364 aa)). 3 residues coordinate L-glutamine: S44, G222, and G224. A Glutamine amidotransferase type-1 domain is found at 177–363 (RICALDCGLK…LETVREAVAG (187 aa)). Catalysis depends on C252, which acts as the Nucleophile; for GATase activity. Residues L253, Q256, N294, G296, and F297 each coordinate L-glutamine. Catalysis depends on for GATase activity residues H336 and E338. Residues 366–394 (GGQTVKERLVQRLCPPGLLIPGSGLPPPR) are linker. The interval 395–933 (KVLILGSGGL…NTHDLDFRTP (539 aa)) is CPSase A. Residues 395–1455 (KVLILGSGGL…APPLKVHVDC (1061 aa)) are CPSase (Carbamoyl phosphate synthase). Phosphothreonine; by MAPK1 is present on T456. Residues R515, R555, G561, G562, K592, E599, G625, I626, H627, Q668, and E682 each coordinate ATP. Positions 519 to 711 (AARMAEIGEH…LAYVAAKLAL (193 aa)) constitute an ATP-grasp 1 domain. Q668, E682, and N684 together coordinate Mg(2+). Q668, E682, and N684 together coordinate Mn(2+). At K747 the chain carries N6-acetyllysine. Residues 934 to 1455 (HVLVLGSGVY…APPLKVHVDC (522 aa)) are CPSase B. Position 1038 is a phosphoserine (S1038). The ATP-grasp 2 domain maps to 1052–1243 (SRLLDTIGIS…LVALATRIIM (192 aa)). ATP contacts are provided by R1088, K1127, I1129, E1134, G1159, V1160, H1161, S1162, Q1202, and E1214. Q1202, E1214, and N1216 together coordinate Mg(2+). Mn(2+) is bound by residues Q1202, E1214, and N1216. An MGS-like domain is found at 1308 to 1462 (FKIPKKNILL…VDCMTSQKLV (155 aa)). Position 1406 is a phosphoserine; by PKA (S1406). Position 1411 is an N6-acetyllysine (K1411). Positions 1456-1788 (MTSQKLVRLP…VKGTIRRVVL (333 aa)) are DHOase (dihydroorotase). Residues H1471 and H1473 each coordinate Zn(2+). (S)-dihydroorotate contacts are provided by R1475 and N1505. Residues K1556, H1590, C1613, H1614, and E1637 each coordinate Zn(2+). K1556 is subject to N6-carboxylysine. Residue R1661 participates in (S)-dihydroorotate binding. Residue D1686 participates in Zn(2+) binding. The active-site For DHOase activity is the D1686. Positions 1690 and 1702 each coordinate (S)-dihydroorotate. The interval 1789–1917 (RGEVAYIDGQ…GLLHPQTSPL (129 aa)) is linker. The segment at 1813-1911 (PQGAVPQPPP…QNLGSSGLLH (99 aa)) is disordered. Low complexity predominate over residues 1825–1834 (PATTEITTTP). S1859 carries the phosphoserine; by RPS6KB1 and PKA modification. A compositionally biased stretch (basic and acidic residues) spans 1866-1878 (EEPKEKPSRKVVE). S1873 is subject to Phosphoserine; by PKC; in vitro. Phosphothreonine is present on T1884. Over residues 1899–1911 (ASPQNLGSSGLLH) the composition is skewed to polar residues. 2 positions are modified to phosphoserine: S1900 and S1938. The tract at residues 1918-2225 (LHSLVGQHIL…ALLATVLGRF (308 aa)) is ATCase (Aspartate transcarbamylase). Carbamoyl phosphate is bound by residues R1975 and T1976. K2003 is a binding site for L-aspartate. R2024, H2052, and Q2055 together coordinate carbamoyl phosphate. L-aspartate is bound by residues R2085 and R2146. Positions 2185 and 2186 each coordinate carbamoyl phosphate.

This sequence in the N-terminal section; belongs to the CarA family. It in the 2nd section; belongs to the CarB family. In the 3rd section; belongs to the metallo-dependent hydrolases superfamily. DHOase family. CAD subfamily. The protein in the C-terminal section; belongs to the aspartate/ornithine carbamoyltransferase superfamily. ATCase family. Homohexamer. Interacts with CIPC. Requires Zn(2+) as cofactor. The cofactor is Mg(2+). Mn(2+) is required as a cofactor. Activated by MAP kinase (Erk1/2) phosphorylation just prior to the S phase of the cell cycle, when the demand for pyrimidine nucleotides is greatest, and down-regulated as the cells emerge from S phase by protein kinase A (PKA) phosphorylation. Phosphorylation at Ser-1859 by RPS6KB1 downstream of MTOR promotes oligomerization and stimulates dihydroorotase activity. Phosphorylation at Ser-1406 reduces sensitivity to feedback inhibition by UTP.

It localises to the cytoplasm. The protein localises to the nucleus. It catalyses the reaction hydrogencarbonate + L-glutamine + 2 ATP + H2O = carbamoyl phosphate + L-glutamate + 2 ADP + phosphate + 2 H(+). The catalysed reaction is L-glutamine + H2O = L-glutamate + NH4(+). The enzyme catalyses hydrogencarbonate + NH4(+) + 2 ATP = carbamoyl phosphate + 2 ADP + phosphate + 2 H(+). It carries out the reaction carbamoyl phosphate + L-aspartate = N-carbamoyl-L-aspartate + phosphate + H(+). It catalyses the reaction (S)-dihydroorotate + H2O = N-carbamoyl-L-aspartate + H(+). It participates in pyrimidine metabolism; UMP biosynthesis via de novo pathway; (S)-dihydroorotate from bicarbonate: step 1/3. It functions in the pathway pyrimidine metabolism; UMP biosynthesis via de novo pathway; (S)-dihydroorotate from bicarbonate: step 2/3. Its pathway is pyrimidine metabolism; UMP biosynthesis via de novo pathway; (S)-dihydroorotate from bicarbonate: step 3/3. Allosterically regulated and controlled by phosphorylation. 5-phosphoribose 1-diphosphate (PRPP) is an activator while UMP and UTP are inhibitors of the CPSase reaction. In terms of biological role, multifunctional protein that encodes the first 3 enzymatic activities of the de novo pyrimidine pathway: carbamoylphosphate synthetase (CPSase; EC 6.3.5.5), aspartate transcarbamylase (ATCase; EC 2.1.3.2) and dihydroorotase (DHOase; EC 3.5.2.3). The CPSase-function is accomplished in 2 steps, by a glutamine-dependent amidotransferase activity (GATase) that binds and cleaves glutamine to produce ammonia, followed by an ammonium-dependent carbamoyl phosphate synthetase, which reacts with the ammonia, hydrogencarbonate and ATP to form carbamoyl phosphate. The endogenously produced carbamoyl phosphate is sequestered and channeled to the ATCase active site. ATCase then catalyzes the formation of carbamoyl-L-aspartate from L-aspartate and carbamoyl phosphate. In the last step, DHOase catalyzes the cyclization of carbamoyl aspartate to dihydroorotate. This Mesocricetus auratus (Golden hamster) protein is Multifunctional protein CAD (CAD).